Consider the following 132-residue polypeptide: Protein FasE (132 aa).

The polypeptide is Protein FasE (fasE) (Escherichia coli).